Reading from the N-terminus, the 2159-residue chain is MEGEGHHGVVLACSICGFLFAVLSPFSFWVLWAVNWRPWRLYSWIYARKWPTYVQGPQLSTLCSLLTLCAWLVVISPIAVLLVWGSVLIALMERNIIGLAVIMAGVALLLSFYSIMLWWRTQWQSSEAVAYLLLLAVCLLCAYDFCAIYVTAGASASELNSPSGFFFGVSVISLAINMLFICKILFNVSGFDVDEYVRRSYKFAYSDCVEVAPVSCSPEPPDPSELYMTKSSRVKHLGLLYISSLLVLVGYSILYGLTSKEARWLGALTSVAVVILDWNLGLCSFRFELLKSRMIVLFVAGTSRAFLVSFGVHYWYLGHCISYAFVASVLLSAAVSSWLSISNPSVARIDALRSTVIKLREGFRRKGQNSSSNSSEGCGSSVKRSSGSVEAGQNGNAMDSMYRSNSQSDGVNWSSIPFDRSNSCQEGRSSDKNIDSARASLAHRSNSCLSAVQDSETAVVSVDRHGDPITSLVCSSSGLESHGCEPSGSATTSGNQQLLDLNLAAIFQDRLNDPRISSMLKKNGGLGDVELANLLQDKGLDPNFSYMLKDKVMDPRILALLQRSSLDADREHQDDVDVTATDSDRLDTTIANQISLSEELRRSGLEKWLNISRLIFHHLAGSPIRAFIVFTVMFIIETATVAIYRPETIKVINATHEQFEFGFSILLLSPVVCSIMAFIWSLRAEEMLMTSKPQKYGFIAWLLSTCVGLFLSFLSKSSVILGLSLTVPLMVACLSFAVPIWIRNGYSFWIPGREFANRENVSQAPGEKERALFVITIAVFTASIIGLGAIVSAKPLDALGYKGWDADKNSSYSPYATSMYLGWALSSTIAVITTGLIPIVAWFATYRFSPSSAICVGLFATVLVSFCGASYWGVVNSREDGVPLKADFLAALLPLLCIPAFFSLFTGLYKWKDDDWKISRGVYLFVGMGMLLLFGAVAAVIVTIRPWTVGVACLVAILFLVFVIGVIHYWTSNNFYLTRTQMLLVCSIAFLLALAAFLMGLFHGKPFVGASIGYFSFIFLLTGRALTVLLSPPIVVYSPRVLPVYVYDAHADSAKNVSYAFLILYGIALATEVWGVIASLIMNPPFVGAGVSATTLVIAFSFAVSRPCLTLKMMEDAVHFLSKDTVVQAMSRSANKTRNAISGTYSAPQRSASSAALLVGDPALTLDRAGNFVLPRADVMKLRDRLRNEEIAAGSFLCGVKDCLLICPQSLSNIDYRRNMCAHARILALEEAIDTEWVYMWDKFGGYLLLLLGLTAKAEQIQDEVRLRLFLDSIGLSDLSAKEIKKWMPEDRRQFELIQESYIREKEMEEEALMQRREEEGKGRERRRALLEREERKWKELEISLLSSIPNTGSRDAAAMAAAVRAVGGDSALEDSFARDRVSSIANHIRKAQLARRAEQTGIPGTICILDDEPRSTGRHCGELDLCLCQSQKVTLSIAVMVQPVSGPVCLFGSEFQKVCWEILVAGSEQGMEAGQVGLRLVTKGERMTTVAKEWNIGASSIADGRWHLVTVTLDADLGEATSFIDGVYDGYQNGLPLPTDNGIWEPGTDIWVGARPPMDLDAFGRSDSEGSDSKMQIMDAFLWGRCLSEDEVTVLHTAMSPAEYGFFDLAPGDAWHGSYSARVDDWESEEAYELYDQGDVEWDGQYSSGRKRPVHDAVAIDLDSFARRPRKPRFETRDEVNQRMLSVERAVRDALIAKGERNFTDQEFPPEDRSLFVDPMNPPLKLQVVSEWMRPSDIAKDISISCQPCLFSGSVNSSDVCQGRLGDCWFLSAVAVLTEMSRISEVIITPEYNDEGIYTVRFCIQGEWVAVVVDDWIPCESPGKPAFATSRKQNELWVSILEKAYAKLHGSYEALEGGLVQDALVDLTGGAGEEIDMRSPQAQLDLASGRLWSQLLHFKQEGFLLGAGSPSGSDAHISSSGIVQGHAYSILQVREVDGHKLIQIRNPWANEVEWNGPWSDSSPEWTERMKHKLMHVPQSKNGVFWMSWQDFQIHFRSIYVCRVYPPEMRYSVHGQWRGYNAGGCQDYDSWHQNPQYRLRVTGRDALYPVHVFITLTQGVGFSRKTNGFRNYQSSHDSSMFYIGMRILKTQGCRAAYNIYMHESAGGTDYVNSREISCELVLDPYPKGYTIVPTTIHPGEEAPFVLSVFSKASIRLEAV.

An N-terminal signal peptide occupies residues 1–33 (MEGEGHHGVVLACSICGFLFAVLSPFSFWVLWA). Over 34–70 (VNWRPWRLYSWIYARKWPTYVQGPQLSTLCSLLTLCA) the chain is Extracellular. A helical membrane pass occupies residues 71–91 (WLVVISPIAVLLVWGSVLIAL). Residues 92-95 (MERN) lie on the Cytoplasmic side of the membrane. A helical membrane pass occupies residues 96–116 (IIGLAVIMAGVALLLSFYSIM). At 117–127 (LWWRTQWQSSE) the chain is on the extracellular side. A helical transmembrane segment spans residues 128–148 (AVAYLLLLAVCLLCAYDFCAI). The Cytoplasmic segment spans residues 149–164 (YVTAGASASELNSPSG). The chain crosses the membrane as a helical span at residues 165 to 185 (FFFGVSVISLAINMLFICKIL). Topologically, residues 186–236 (FNVSGFDVDEYVRRSYKFAYSDCVEVAPVSCSPEPPDPSELYMTKSSRVKH) are extracellular. Residues 237–257 (LGLLYISSLLVLVGYSILYGL) traverse the membrane as a helical segment. At 258–264 (TSKEARW) the chain is on the cytoplasmic side. A helical transmembrane segment spans residues 265–285 (LGALTSVAVVILDWNLGLCSF). Residues 286-294 (RFELLKSRM) are Extracellular-facing. A helical transmembrane segment spans residues 295–315 (IVLFVAGTSRAFLVSFGVHYW). Residues 316–320 (YLGHC) lie on the Cytoplasmic side of the membrane. A helical transmembrane segment spans residues 321–341 (ISYAFVASVLLSAAVSSWLSI). The Extracellular segment spans residues 342–623 (SNPSVARIDA…LIFHHLAGSP (282 aa)). A disordered region spans residues 365–409 (RKGQNSSSNSSEGCGSSVKRSSGSVEAGQNGNAMDSMYRSNSQSD). A compositionally biased stretch (low complexity) spans 369–381 (NSSSNSSEGCGSS). Residues 382–409 (VKRSSGSVEAGQNGNAMDSMYRSNSQSD) are compositionally biased toward polar residues. A helical membrane pass occupies residues 624-644 (IRAFIVFTVMFIIETATVAIY). Over 645–660 (RPETIKVINATHEQFE) the chain is Cytoplasmic. The chain crosses the membrane as a helical span at residues 661–681 (FGFSILLLSPVVCSIMAFIWS). Over 682–694 (LRAEEMLMTSKPQ) the chain is Extracellular. A helical membrane pass occupies residues 695–715 (KYGFIAWLLSTCVGLFLSFLS). Residues 716–719 (KSSV) are Cytoplasmic-facing. A helical transmembrane segment spans residues 720–740 (ILGLSLTVPLMVACLSFAVPI). The Extracellular segment spans residues 741-770 (WIRNGYSFWIPGREFANRENVSQAPGEKER). Residues 771 to 791 (ALFVITIAVFTASIIGLGAIV) form a helical membrane-spanning segment. Over 792–822 (SAKPLDALGYKGWDADKNSSYSPYATSMYLG) the chain is Cytoplasmic. The chain crosses the membrane as a helical span at residues 823–843 (WALSSTIAVITTGLIPIVAWF). Residues 844 to 853 (ATYRFSPSSA) are Extracellular-facing. The helical transmembrane segment at 854 to 874 (ICVGLFATVLVSFCGASYWGV) threads the bilayer. At 875 to 887 (VNSREDGVPLKAD) the chain is on the cytoplasmic side. Residues 888–908 (FLAALLPLLCIPAFFSLFTGL) form a helical membrane-spanning segment. At 909-921 (YKWKDDDWKISRG) the chain is on the extracellular side. Residues 922 to 942 (VYLFVGMGMLLLFGAVAAVIV) form a helical membrane-spanning segment. The Cytoplasmic segment spans residues 943–946 (TIRP). The helical transmembrane segment at 947–967 (WTVGVACLVAILFLVFVIGVI) threads the bilayer. Residues 968-981 (HYWTSNNFYLTRTQ) are Extracellular-facing. The helical transmembrane segment at 982 to 1002 (MLLVCSIAFLLALAAFLMGLF) threads the bilayer. The Cytoplasmic segment spans residues 1003–1016 (HGKPFVGASIGYFS). A helical membrane pass occupies residues 1017–1037 (FIFLLTGRALTVLLSPPIVVY). Topologically, residues 1038–1060 (SPRVLPVYVYDAHADSAKNVSYA) are extracellular. A helical membrane pass occupies residues 1061 to 1081 (FLILYGIALATEVWGVIASLI). The Cytoplasmic segment spans residues 1082–2159 (MNPPFVGAGV…SKASIRLEAV (1078 aa)). A phosphoserine mark is found at Ser1371 and Ser1376. Residues 1417–1609 (TGRHCGELDL…MSPAEYGFFD (193 aa)) enclose the Calpain catalytic 1 domain. Phosphoserine is present on Ser1665. The Calpain catalytic 2 domain maps to 1703–2005 (NFTDQEFPPE…FRSIYVCRVY (303 aa)). Residues Cys1769, His1927, and Asn1947 contribute to the active site.

It belongs to the peptidase C2 family. Post-translationally, autocatalytic proteolytic cleavage leading to the production of mainly cytoplasmic localized subproducts of about 85 and 120 kDa. As to expression, expressed in most tissues at low levels ranging from 30 to 55 ppm. Present in all endosperm cells at transcript level, but confined to aleurones at protein level.

It is found in the endoplasmic reticulum membrane. The protein resides in the cytoplasm. It localises to the cell membrane. The protein localises to the endosome membrane. Functionally, essential protease involved in epiderm development. Required for aleurone cell development in the endosperm probably by maintaining and restricting the aleurone and embryonic epidermal L1 cell-layer fates as well as meristems organization. Involved in the maintenance of adaxial/abaxial axis information in developing leaves, probably by regulating cell proliferation and expansion. Does not need calcium ions to be active. The polypeptide is Calpain-type cysteine protease DEK1 (DEK1) (Zea mays (Maize)).